Reading from the N-terminus, the 108-residue chain is Monothiol bacilliredoxin BrxC (108 aa).

C31 is modified (S-bacillithiol cysteine disulfide).

Interacts with AbrB, BdhA, Bdr, BrxB, FolD, GapA, GapB, GatA, PfkA, PyrAA, PyrAB, PyrE, PyrG, PyrH, RpsB, RpsK, RpsL, SalA, SucC, Tuf and YtsJ. Cys can react with bacillithiol (BSH) to form mixed disulfides. S-bacillithiolation protects Cys residues against overoxidation by acting as a redox switch in response to oxidative stress.

Its function is as follows. S-bacillithiolation is the formation of mixed disulfide bonds between protein thiols and the general thiol reductant bacillithiol (BSH) under oxidative stress. BSH is an equivalent of glutathione (GSH) in Firmicutes. This protein is a monothiol bacilliredoxin, which debacillithiolates (removes BSH) the S-bacillithiolated glyceraldehyde-3-phosphate dehydrogenases (GAPDHs) GapA and GapB in vivo and probably a number of other oxidized cytosolic proteins. Debacillithiolates the S-bacillithiolated Bdr (Bdr-SSB) and BrxB (BrxB-SSB) in vitro. Involved in maintaining redox homeostasis in response to disulfide stress conditions. This is Monothiol bacilliredoxin BrxC from Bacillus subtilis (strain 168).